Reading from the N-terminus, the 206-residue chain is Transcription antitermination protein NusB (206 aa).

A disordered region spans residues 135 to 206; it reads ARGEKTSAQE…ETQPPGVNEV (72 aa). The span at 169 to 180 shows a compositional bias: low complexity; the sequence is ATPATTPVTTTV.

Belongs to the NusB family.

Functionally, involved in transcription antitermination. Required for transcription of ribosomal RNA (rRNA) genes. Binds specifically to the boxA antiterminator sequence of the ribosomal RNA (rrn) operons. This is Transcription antitermination protein NusB from Heliobacterium modesticaldum (strain ATCC 51547 / Ice1).